Reading from the N-terminus, the 79-residue chain is Small ribosomal subunit protein eS17 (79 aa).

This sequence belongs to the eukaryotic ribosomal protein eS17 family.

This is Small ribosomal subunit protein eS17 from Saccharolobus islandicus (strain Y.N.15.51 / Yellowstone #2) (Sulfolobus islandicus).